We begin with the raw amino-acid sequence, 222 residues long: Peptide methionine sulfoxide reductase MsrA (222 aa).

Residue C54 is part of the active site.

The protein belongs to the MsrA Met sulfoxide reductase family.

The enzyme catalyses L-methionyl-[protein] + [thioredoxin]-disulfide + H2O = L-methionyl-(S)-S-oxide-[protein] + [thioredoxin]-dithiol. It catalyses the reaction [thioredoxin]-disulfide + L-methionine + H2O = L-methionine (S)-S-oxide + [thioredoxin]-dithiol. Functionally, has an important function as a repair enzyme for proteins that have been inactivated by oxidation. Catalyzes the reversible oxidation-reduction of methionine sulfoxide in proteins to methionine. This Methylococcus capsulatus (strain ATCC 33009 / NCIMB 11132 / Bath) protein is Peptide methionine sulfoxide reductase MsrA.